A 464-amino-acid polypeptide reads, in one-letter code: Soluble pyridine nucleotide transhydrogenase (464 aa).

35–44 (DSRRQVGGNC) lines the FAD pocket.

This sequence belongs to the class-I pyridine nucleotide-disulfide oxidoreductase family. Requires FAD as cofactor.

It is found in the cytoplasm. The enzyme catalyses NAD(+) + NADPH = NADH + NADP(+). Conversion of NADPH, generated by peripheral catabolic pathways, to NADH, which can enter the respiratory chain for energy generation. The protein is Soluble pyridine nucleotide transhydrogenase of Pseudomonas fluorescens (strain SBW25).